The sequence spans 695 residues: ATP-dependent permease MDL1, mitochondrial (695 aa).

A mitochondrion-targeting transit peptide spans 1-100 (MIVRMIRLCK…RLFVLSKPES (100 aa)). A run of 5 helical transmembrane segments spans residues 103–123 (IGLA…VPSV), 156–176 (FTAL…RIII), 242–262 (FVGF…MMIL), 337–357 (GLFF…LLLV), and 372–392 (LSSF…LSSF). Residues 103–398 (IGLALLLILI…LSSFYSELMK (296 aa)) enclose the ABC transmembrane type-1 domain. One can recognise an ABC transporter domain in the interval 432-673 (IVFKNVSFTY…PNSELNALLA (242 aa)). 467 to 474 (GPSGSGKS) is a binding site for ATP.

It belongs to the ABC transporter superfamily. ABCB family. Mitochondrial peptide exporter (TC 3.A.1.212) subfamily.

The protein resides in the mitochondrion inner membrane. Functionally, mediates export of peptides with molecular masses of 2100 to 600 daltons generated upon proteolysis of mitochondrial inner membrane proteins. The polypeptide is ATP-dependent permease MDL1, mitochondrial (MDL1) (Saccharomyces cerevisiae (strain ATCC 204508 / S288c) (Baker's yeast)).